A 317-amino-acid polypeptide reads, in one-letter code: tRNA dimethylallyltransferase (317 aa).

ATP is bound at residue 14–21; the sequence is GPTAVGKT. 16–21 serves as a coordination point for substrate; sequence TAVGKT. The interaction with substrate tRNA stretch occupies residues 39–42; the sequence is DSMQ.

The protein belongs to the IPP transferase family. Monomer. Mg(2+) is required as a cofactor.

The catalysed reaction is adenosine(37) in tRNA + dimethylallyl diphosphate = N(6)-dimethylallyladenosine(37) in tRNA + diphosphate. Functionally, catalyzes the transfer of a dimethylallyl group onto the adenine at position 37 in tRNAs that read codons beginning with uridine, leading to the formation of N6-(dimethylallyl)adenosine (i(6)A). In Bacillus cereus (strain ATCC 10987 / NRS 248), this protein is tRNA dimethylallyltransferase.